A 167-amino-acid polypeptide reads, in one-letter code: Glutathione peroxidase-like peroxiredoxin 1 (167 aa).

C36 (cysteine sulfenic acid (-SOH) intermediate) is an active-site residue. The cysteines at positions 36 and 82 are disulfide-linked.

The protein belongs to the glutathione peroxidase family. As to quaternary structure, monomer.

It localises to the peroxisome matrix. It is found in the mitochondrion outer membrane. The enzyme catalyses 2 glutathione + H2O2 = glutathione disulfide + 2 H2O. It carries out the reaction a hydroperoxide + [thioredoxin]-dithiol = an alcohol + [thioredoxin]-disulfide + H2O. Functionally, glutathione peroxidase-like protein that protects cells from phospholipid hydroperoxides and nonphospholipid peroxides during oxidative stress. Has peroxidase activity using thioredoxin or glutathione as a reducing power. Involved in peroxisome formation. This chain is Glutathione peroxidase-like peroxiredoxin 1, found in Saccharomyces cerevisiae (strain ATCC 204508 / S288c) (Baker's yeast).